The sequence spans 680 residues: DNA-directed RNA polymerase subunit beta' (680 aa).

Zn(2+) is bound by residues C69, C71, C87, and C90. The Mg(2+) site is built by D489, D491, and D493.

This sequence belongs to the RNA polymerase beta' chain family. RpoC1 subfamily. As to quaternary structure, in plastids the minimal PEP RNA polymerase catalytic core is composed of four subunits: alpha, beta, beta', and beta''. When a (nuclear-encoded) sigma factor is associated with the core the holoenzyme is formed, which can initiate transcription. The cofactor is Mg(2+). Zn(2+) is required as a cofactor.

It localises to the plastid. Its subcellular location is the chloroplast. The enzyme catalyses RNA(n) + a ribonucleoside 5'-triphosphate = RNA(n+1) + diphosphate. DNA-dependent RNA polymerase catalyzes the transcription of DNA into RNA using the four ribonucleoside triphosphates as substrates. This is DNA-directed RNA polymerase subunit beta' from Citrus sinensis (Sweet orange).